We begin with the raw amino-acid sequence, 209 residues long: MEGGGRSSNKSTSGLAGFFGAGGAGYSNADLAGVPLTGMNPLSPYLNVDPRYLVQDTDEFILPTGANKTRGRFELAFFTIGGCCMTGAAFGAMNGLRLGLKETQSMAWSKPRNVQILNMVTRQGALWANTLGSLALLYSAFGVIIEKTRGAEDDLNTVAAGTMTGMLYKCTGGLRGIARGGLAGLTLTSLYALYNNWVHMKGSLLQQSL.

The next 3 helical transmembrane spans lie at 73 to 93, 125 to 145, and 181 to 197; these read FELAFFTIGGCCMTGAAFGAM, ALWANTLGSLALLYSAFGVII, and GLAGLTLTSLYALYNNW.

This sequence belongs to the Tim17/Tim22/Tim23 family. As to quaternary structure, component of the TIM23 complex at least composed of TIMM23, TIMM17 (TIMM17A or TIMM17B) and TIMM50; within this complex, directly interacts with TIMM50. The complex interacts with the TIMM44 component of the PAM complex and with DNAJC15. Upon mitochondrial depolarization, interacts with PINK1; the interaction is required for PINK1 accumulation at the outer mitochondrial membrane, kinase activation by autophosphorylation and PRKN recruitement to mitochondria.

The protein resides in the mitochondrion inner membrane. Functionally, essential component of the TIM23 complex, a complex that mediates the translocation of transit peptide-containing proteins across the mitochondrial inner membrane. Has a role in the activation of stress-induced mitophagy by protecting PINK1 from OMA1-mediated degradation and facilitating its accumulation at the outer mitochondrial membrane in response to depolarization. In Mus musculus (Mouse), this protein is Mitochondrial import inner membrane translocase subunit Tim23 (Timm23).